A 370-amino-acid chain; its full sequence is Cytochrome b (370 aa).

4 helical membrane passes run 30-50, 74-96, 109-129, and 175-195; these read FGSM…FLAF, WVFR…LHIF, VWMS…MGYV, and FFVL…GHLI. Residues histidine 80 and histidine 94 each contribute to the heme b site. 2 residues coordinate heme b: histidine 179 and histidine 193. Histidine 198 contacts a ubiquinone. 4 consecutive transmembrane segments (helical) span residues 221–240, 284–304, 316–336, and 342–362; these read YLGK…VLSL, VLGV…ALVN, FLVF…QCTV, and ILSP…LFIF.

Belongs to the cytochrome b family. In terms of assembly, the main subunits of complex b-c1 are: cytochrome b, cytochrome c1 and the Rieske protein. Requires heme b as cofactor.

The protein localises to the mitochondrion inner membrane. Component of the ubiquinol-cytochrome c reductase complex (complex III or cytochrome b-c1 complex) that is part of the mitochondrial respiratory chain. The b-c1 complex mediates electron transfer from ubiquinol to cytochrome c. Contributes to the generation of a proton gradient across the mitochondrial membrane that is then used for ATP synthesis. In Caenorhabditis elegans, this protein is Cytochrome b.